The following is a 311-amino-acid chain: Olfactory receptor-like protein OLF1 (311 aa).

Residues 1–24 are Extracellular-facing; it reads MDGNYTLVTEFILLGFPTRPELQI. Asparagine 4 carries N-linked (GlcNAc...) asparagine glycosylation. A helical membrane pass occupies residues 25 to 48; that stretch reads VLFLVFLTLYGIILTGNIGLMMLI. Residues 49–56 are Cytoplasmic-facing; it reads RTDPHLQT. Residues 57–78 traverse the membrane as a helical segment; sequence PMYFFLSNLSFADLCFSSAIVP. At 79 to 99 the chain is on the extracellular side; it reads KMLVNFLSENKSISLYGCALQ. The chain crosses the membrane as a helical span at residues 100-119; sequence FYFSCAFADTESFILAAMAY. Topologically, residues 120 to 138 are cytoplasmic; it reads DRYVAICNPLLYTVVMSRG. A helical membrane pass occupies residues 139 to 157; sequence ICVWLIVLSYIGGNMSSLV. The Extracellular segment spans residues 158-195; the sequence is HTSFAFILKYCDKNVINHFFCDLPPLLKLSCTDTSVNE. The helical transmembrane segment at 196–218 threads the bilayer; the sequence is WLLSTYGSSVEIFCFIVIVISYY. The Cytoplasmic segment spans residues 219–235; it reads FILRSVLRIRSSSGRKK. A helical transmembrane segment spans residues 236–259; the sequence is TFSTCASHLTSVAIYQGTLLFIYS. Topologically, residues 260–271 are extracellular; that stretch reads RPTYLYTPNTDK. Residues 272-291 form a helical membrane-spanning segment; it reads IISVFYTIIIPVLNPLIYSL. At 292 to 311 the chain is on the cytoplasmic side; it reads RNKDVKDAAKRAVRLKVDSS.

This sequence belongs to the G-protein coupled receptor 1 family.

The protein localises to the cell membrane. Putative odorant or sperm cell receptor. In Canis lupus familiaris (Dog), this protein is Olfactory receptor-like protein OLF1.